Here is a 402-residue protein sequence, read N- to C-terminus: Endoglucanase 1 (402 aa).

The residue at position 1 (Q1) is a Pyrrolidone carboxylic acid. Disulfide bonds link C18–C24, C51–C73, and C63–C69. Residue N89 is glycosylated (N-linked (GlcNAc...) asparagine). Intrachain disulfides connect C140–C365, C172–C195, C176–C194, C215–C234, C223–C228, and C239–C315. Catalysis depends on E197, which acts as the Nucleophile. The active-site Proton donor is E202. The N-linked (GlcNAc...) asparagine glycan is linked to N247.

This sequence belongs to the glycosyl hydrolase 7 (cellulase C) family. As to quaternary structure, monomer.

Its subcellular location is the secreted. It carries out the reaction Endohydrolysis of (1-&gt;4)-beta-D-glucosidic linkages in cellulose, lichenin and cereal beta-D-glucans.. Its function is as follows. The biological conversion of cellulose to glucose generally requires three types of hydrolytic enzymes: (1) Endoglucanases which cut internal beta-1,4-glucosidic bonds; (2) Exocellobiohydrolases that cut the disaccharide cellobiose from the non-reducing end of the cellulose polymer chain; (3) Beta-1,4-glucosidases which hydrolyze the cellobiose and other short cello-oligosaccharides to glucose. This is Endoglucanase 1 (CEL7B) from Humicola insolens (Soft-rot fungus).